We begin with the raw amino-acid sequence, 82 residues long: Small ribosomal subunit protein bS16 (82 aa).

This sequence belongs to the bacterial ribosomal protein bS16 family.

The polypeptide is Small ribosomal subunit protein bS16 (Desulfosudis oleivorans (strain DSM 6200 / JCM 39069 / Hxd3) (Desulfococcus oleovorans)).